The chain runs to 370 residues: tRNA 2-selenouridine synthase (370 aa).

Positions Phe12–Gln136 constitute a Rhodanese domain. Cys95 (S-selanylcysteine intermediate) is an active-site residue.

Belongs to the SelU family. Monomer.

The catalysed reaction is 5-methylaminomethyl-2-thiouridine(34) in tRNA + selenophosphate + (2E)-geranyl diphosphate + H2O + H(+) = 5-methylaminomethyl-2-selenouridine(34) in tRNA + (2E)-thiogeraniol + phosphate + diphosphate. It catalyses the reaction 5-methylaminomethyl-2-thiouridine(34) in tRNA + (2E)-geranyl diphosphate = 5-methylaminomethyl-S-(2E)-geranyl-thiouridine(34) in tRNA + diphosphate. It carries out the reaction 5-methylaminomethyl-S-(2E)-geranyl-thiouridine(34) in tRNA + selenophosphate + H(+) = 5-methylaminomethyl-2-(Se-phospho)selenouridine(34) in tRNA + (2E)-thiogeraniol. The enzyme catalyses 5-methylaminomethyl-2-(Se-phospho)selenouridine(34) in tRNA + H2O = 5-methylaminomethyl-2-selenouridine(34) in tRNA + phosphate. In terms of biological role, involved in the post-transcriptional modification of the uridine at the wobble position (U34) of tRNA(Lys), tRNA(Glu) and tRNA(Gln). Catalyzes the conversion of 2-thiouridine (S2U-RNA) to 2-selenouridine (Se2U-RNA). Acts in a two-step process involving geranylation of 2-thiouridine (S2U) to S-geranyl-2-thiouridine (geS2U) and subsequent selenation of the latter derivative to 2-selenouridine (Se2U) in the tRNA chain. The polypeptide is tRNA 2-selenouridine synthase (Pseudomonas putida (strain ATCC 47054 / DSM 6125 / CFBP 8728 / NCIMB 11950 / KT2440)).